We begin with the raw amino-acid sequence, 230 residues long: UPF0688 protein C1orf174 homolog (230 aa).

Disordered regions lie at residues 1–85 (MRSR…SLPK) and 97–166 (AEDS…VRAS). Residues 11 to 30 (RSSARLRARSYSSASLASAR) are compositionally biased toward low complexity. Over residues 31 to 48 (DVTSSTSAKTTCLASSSH) the composition is skewed to polar residues. Basic and acidic residues predominate over residues 49–78 (KATDRRTSKKFKYDKGHLVKAELQKLDPKS). Residue serine 180 is modified to Phosphoserine.

The protein belongs to the UPF0688 family.

It is found in the nucleus. This Mus musculus (Mouse) protein is UPF0688 protein C1orf174 homolog.